The chain runs to 344 residues: rRNA 2'-O-methyltransferase fibrillarin (344 aa).

The disordered stretch occupies residues 1 to 113 (MGKPGFSPRG…GFKGGKTVTI (113 aa)). The segment covering 8–107 (PRGGGGGGGG…RGGGAGGFKG (100 aa)) has biased composition (gly residues). Residues Arg9, Arg23, Arg25, Arg40, Arg42, Arg48, Arg51, Arg58, Arg63, Arg71, Arg77, Arg83, Arg88, Arg93, and Arg98 each carry the asymmetric dimethylarginine modification. Residues 197-198 (TT), 216-217 (EF), 241-242 (DA), and 261-264 (DVAQ) contribute to the S-adenosyl-L-methionine site.

The protein belongs to the methyltransferase superfamily. Fibrillarin family. Component of box C/D small nucleolar ribonucleoprotein (snoRNP) particles. It is associated with the U3, U8 and U13 small nuclear RNAs. In terms of processing, by homology to other fibrillarins, some or all of the N-terminal domain arginines are modified to asymmetric dimethylarginine (DMA).

It is found in the nucleus. The protein localises to the nucleolus. It catalyses the reaction L-glutaminyl-[histone H2A] + S-adenosyl-L-methionine = N(5)-methyl-L-glutaminyl-[histone H2A] + S-adenosyl-L-homocysteine + H(+). S-adenosyl-L-methionine-dependent methyltransferase that has the ability to methylate both RNAs and proteins. Involved in pre-rRNA processing. Utilizes the methyl donor S-adenosyl-L-methionine to catalyze the site-specific 2'-hydroxyl methylation of ribose moieties in pre-ribosomal RNA. Site specificity is provided by a guide RNA that base pairs with the substrate. Methylation occurs at a characteristic distance from the sequence involved in base pairing with the guide RNA. Also acts as a protein methyltransferase by mediating methylation of 'Gln-105' of histone H2A (H2AQ105me), a modification that impairs binding of the FACT complex and is specifically present at 35S ribosomal DNA locus. The polypeptide is rRNA 2'-O-methyltransferase fibrillarin (Drosophila melanogaster (Fruit fly)).